The following is a 140-amino-acid chain: Nucleoside diphosphate kinase (140 aa).

ATP is bound by residues Lys-11, Phe-59, Arg-87, Thr-93, Arg-104, and Asn-114. The active-site Pros-phosphohistidine intermediate is His-117.

It belongs to the NDK family. As to quaternary structure, homotetramer. It depends on Mg(2+) as a cofactor.

The protein localises to the cytoplasm. It catalyses the reaction a 2'-deoxyribonucleoside 5'-diphosphate + ATP = a 2'-deoxyribonucleoside 5'-triphosphate + ADP. The enzyme catalyses a ribonucleoside 5'-diphosphate + ATP = a ribonucleoside 5'-triphosphate + ADP. Major role in the synthesis of nucleoside triphosphates other than ATP. The ATP gamma phosphate is transferred to the NDP beta phosphate via a ping-pong mechanism, using a phosphorylated active-site intermediate. In Rickettsia canadensis (strain McKiel), this protein is Nucleoside diphosphate kinase.